Here is a 429-residue protein sequence, read N- to C-terminus: Glutamate-1-semialdehyde 2,1-aminomutase (429 aa).

K265 is subject to N6-(pyridoxal phosphate)lysine.

It belongs to the class-III pyridoxal-phosphate-dependent aminotransferase family. HemL subfamily. In terms of assembly, homodimer. It depends on pyridoxal 5'-phosphate as a cofactor.

The protein localises to the cytoplasm. It carries out the reaction (S)-4-amino-5-oxopentanoate = 5-aminolevulinate. The protein operates within porphyrin-containing compound metabolism; protoporphyrin-IX biosynthesis; 5-aminolevulinate from L-glutamyl-tRNA(Glu): step 2/2. The polypeptide is Glutamate-1-semialdehyde 2,1-aminomutase (Shewanella pealeana (strain ATCC 700345 / ANG-SQ1)).